A 435-amino-acid chain; its full sequence is Adenylosuccinate synthetase (435 aa).

GTP-binding positions include 17–23 (GDEGKGK) and 45–47 (GHT). Residue Asp-18 is the Proton acceptor of the active site. Mg(2+)-binding residues include Asp-18 and Gly-45. IMP contacts are provided by residues 18–21 (DEGK), 43–46 (NAGH), Thr-135, Arg-149, Gln-230, Thr-245, and Arg-309. His-46 (proton donor) is an active-site residue. 305 to 311 (TVSGRAR) is a binding site for substrate. GTP contacts are provided by residues Arg-311, 337–339 (LLD), and 419–421 (SVG).

Belongs to the adenylosuccinate synthetase family. As to quaternary structure, homodimer. Mg(2+) serves as cofactor.

It is found in the cytoplasm. The enzyme catalyses IMP + L-aspartate + GTP = N(6)-(1,2-dicarboxyethyl)-AMP + GDP + phosphate + 2 H(+). The protein operates within purine metabolism; AMP biosynthesis via de novo pathway; AMP from IMP: step 1/2. Functionally, plays an important role in the de novo pathway of purine nucleotide biosynthesis. Catalyzes the first committed step in the biosynthesis of AMP from IMP. This is Adenylosuccinate synthetase from Spiroplasma citri.